We begin with the raw amino-acid sequence, 126 residues long: Aspartate 1-decarboxylase (126 aa).

Catalysis depends on S25, which acts as the Schiff-base intermediate with substrate; via pyruvic acid. S25 carries the pyruvic acid (Ser) modification. T57 contributes to the substrate binding site. The Proton donor role is filled by Y58. A substrate-binding site is contributed by 73–75 (GAA).

Belongs to the PanD family. As to quaternary structure, heterooctamer of four alpha and four beta subunits. Requires pyruvate as cofactor. Post-translationally, is synthesized initially as an inactive proenzyme, which is activated by self-cleavage at a specific serine bond to produce a beta-subunit with a hydroxyl group at its C-terminus and an alpha-subunit with a pyruvoyl group at its N-terminus.

It localises to the cytoplasm. The catalysed reaction is L-aspartate + H(+) = beta-alanine + CO2. It functions in the pathway cofactor biosynthesis; (R)-pantothenate biosynthesis; beta-alanine from L-aspartate: step 1/1. Functionally, catalyzes the pyruvoyl-dependent decarboxylation of aspartate to produce beta-alanine. This Proteus mirabilis (strain HI4320) protein is Aspartate 1-decarboxylase.